The chain runs to 204 residues: uncharacterized protein (204 aa).

Catalysis depends on Cys52, which acts as the Acyl-thioester intermediate. Residues His89 and Asp104 contribute to the active site.

It belongs to the arylamine N-acetyltransferase family.

This is an uncharacterized protein from Acanthamoeba polyphaga mimivirus (APMV).